The sequence spans 339 residues: Ketol-acid reductoisomerase (NADP(+)) (339 aa).

One can recognise a KARI N-terminal Rossmann domain in the interval 1–182; the sequence is MRVYYDRDAD…GGGRSGIIET (182 aa). Residues 24 to 27, arginine 48, serine 51, serine 53, and 83 to 86 each bind NADP(+); these read YGSQ and DELQ. Residue histidine 108 is part of the active site. Position 134 (glycine 134) interacts with NADP(+). Residues 183-328 enclose the KARI C-terminal knotted domain; it reads TFREECETDL…EKLRGMMPWI (146 aa). Residues aspartate 191, glutamate 195, glutamate 227, and glutamate 231 each contribute to the Mg(2+) site. Serine 252 is a binding site for substrate.

It belongs to the ketol-acid reductoisomerase family. Mg(2+) is required as a cofactor.

It carries out the reaction (2R)-2,3-dihydroxy-3-methylbutanoate + NADP(+) = (2S)-2-acetolactate + NADPH + H(+). It catalyses the reaction (2R,3R)-2,3-dihydroxy-3-methylpentanoate + NADP(+) = (S)-2-ethyl-2-hydroxy-3-oxobutanoate + NADPH + H(+). Its pathway is amino-acid biosynthesis; L-isoleucine biosynthesis; L-isoleucine from 2-oxobutanoate: step 2/4. It functions in the pathway amino-acid biosynthesis; L-valine biosynthesis; L-valine from pyruvate: step 2/4. In terms of biological role, involved in the biosynthesis of branched-chain amino acids (BCAA). Catalyzes an alkyl-migration followed by a ketol-acid reduction of (S)-2-acetolactate (S2AL) to yield (R)-2,3-dihydroxy-isovalerate. In the isomerase reaction, S2AL is rearranged via a Mg-dependent methyl migration to produce 3-hydroxy-3-methyl-2-ketobutyrate (HMKB). In the reductase reaction, this 2-ketoacid undergoes a metal-dependent reduction by NADPH to yield (R)-2,3-dihydroxy-isovalerate. In Magnetospirillum molischianum (Rhodospirillum molischianum), this protein is Ketol-acid reductoisomerase (NADP(+)).